The primary structure comprises 72 residues: Conorfamide-Tx2 (72 aa).

A signal peptide spans 1–19; the sequence is MSGRGFLLLALLLLVTVEA. The propeptide occupies 20–25; the sequence is TRVEKK. The tract at residues 32–39 is positively charged region crucial for activity against MRGPRX1 receptors; the sequence is AWSGPRNR. The residue at position 43 (Ile43) is an Isoleucine amide. The propeptide occupies 44–72; it reads GRRDMQSPLLSERLRFRALGFRQPSSQKQ.

This sequence belongs to the FARP (FMRFamide related peptide) family. In terms of tissue distribution, expressed by the venom duct.

Its subcellular location is the secreted. This peptide activates human sensory neuron-specific G-protein coupled receptors MRGPRX1, but not mouse receptors (EC(50)=0.54 uM). Compared with the agonist chloroquine (anti-malaria drug), it is 600-fold more potent. In vivo, induces itch sensation, since intradermal cheek injection into humanized transgenic mouse (mouse MRGPRX1 replaced by human MRGPRX1) induces scratching. In vivo, treatment of zebrafish larvae with high doses (10 uM) induces hypoactivity at the beginning of the experiment during the dark phase and hyperactivity in the strobe phase after one hour, even after the removal of the toxin from the solution. The protein is Conorfamide-Tx2 of Conus textile (Cloth-of-gold cone).